Here is a 232-residue protein sequence, read N- to C-terminus: 2,3-bisphosphoglycerate-dependent phosphoglycerate mutase (232 aa).

Residues 10 to 17 (RHGESQWN), 23 to 24 (TG), arginine 62, 89 to 92 (ERHY), lysine 100, 116 to 117 (RR), and 185 to 186 (GN) contribute to the substrate site. Histidine 11 (tele-phosphohistidine intermediate) is an active-site residue. The active-site Proton donor/acceptor is glutamate 89.

Belongs to the phosphoglycerate mutase family. BPG-dependent PGAM subfamily. As to quaternary structure, homodimer.

It catalyses the reaction (2R)-2-phosphoglycerate = (2R)-3-phosphoglycerate. The protein operates within carbohydrate degradation; glycolysis; pyruvate from D-glyceraldehyde 3-phosphate: step 3/5. Catalyzes the interconversion of 2-phosphoglycerate and 3-phosphoglycerate. This chain is 2,3-bisphosphoglycerate-dependent phosphoglycerate mutase, found in Blochmanniella floridana.